We begin with the raw amino-acid sequence, 218 residues long: MFENEKRMAAMEALKFVRNDMRIGIGTGSTAYYFIEGLSELVKNGLRITGIPTSKKSEELCRSFNIPVDYNIKDIDIDFDGADEFDPYGNLIKGGGGALVREKIVAYNSREFYVLVDHSKYSERLHKFPLPVEVLPFMSEKTLENIERLGCRASFRDDKKFISDNGNYIIDCVFSYTDPELESQIKMIPGVVEVGIFRHLSTKIFQGTIDGCRIIDVK.

Substrate-binding positions include 27–30 (TGST), 80–83 (DGAD), and 93–96 (KGGG). E102 acts as the Proton acceptor in catalysis. K120 serves as a coordination point for substrate.

It belongs to the ribose 5-phosphate isomerase family. In terms of assembly, homodimer.

It carries out the reaction aldehydo-D-ribose 5-phosphate = D-ribulose 5-phosphate. It participates in carbohydrate degradation; pentose phosphate pathway; D-ribose 5-phosphate from D-ribulose 5-phosphate (non-oxidative stage): step 1/1. Catalyzes the reversible conversion of ribose-5-phosphate to ribulose 5-phosphate. The polypeptide is Ribose-5-phosphate isomerase A (Picrophilus torridus (strain ATCC 700027 / DSM 9790 / JCM 10055 / NBRC 100828 / KAW 2/3)).